The primary structure comprises 363 residues: Fructose-bisphosphate aldolase 1 (363 aa).

Residue aspartate 34 coordinates dihydroxyacetone phosphate. 2 residues coordinate D-glyceraldehyde 3-phosphate: serine 36 and threonine 39. Residue arginine 43 participates in beta-D-fructose 1,6-bisphosphate binding. D-glyceraldehyde 3-phosphate is bound at residue lysine 107. Lysine 146 serves as a coordination point for dihydroxyacetone phosphate. D-glyceraldehyde 3-phosphate is bound at residue glutamate 189. Glutamate 189 (proton acceptor) is an active-site residue. Lysine 231, serine 273, and glycine 274 together coordinate dihydroxyacetone phosphate. Catalysis depends on lysine 231, which acts as the Schiff-base intermediate with dihydroxyacetone phosphate. Residues 273 to 275 (SGG) and serine 301 each bind beta-D-fructose 1,6-bisphosphate. Residues glycine 303 and arginine 304 each coordinate dihydroxyacetone phosphate. Residue arginine 304 coordinates beta-D-fructose 1,6-bisphosphate.

Belongs to the class I fructose-bisphosphate aldolase family. In terms of assembly, homotetramer. Component of a complex, at least composed of ald-1, microneme protein MIC2 and ACT1. Interacts with microneme protein MIC2 (via cytoplasmic tail). Interacts with ACT1 (F-actin).

The protein localises to the cytoplasm. The catalysed reaction is beta-D-fructose 1,6-bisphosphate = D-glyceraldehyde 3-phosphate + dihydroxyacetone phosphate. It functions in the pathway carbohydrate degradation; glycolysis; D-glyceraldehyde 3-phosphate and glycerone phosphate from D-glucose: step 4/4. Functionally, plays a key role in glycolysis by catalyzing the cleavage of fructose 1,6-bisphosphate into dihydroxyacetone phosphate and glyceraldehyde 3-phosphate. Forms a bridge between cell surface adhesins and the actin cytoskeleton. Required for parasite invasion of host cells. The protein is Fructose-bisphosphate aldolase 1 of Toxoplasma gondii.